The sequence spans 503 residues: ESX-5 secretion system protein EccD5 (503 aa).

Transmembrane regions (helical) follow at residues 137-157, 169-189, 200-220, 224-244, 250-270, 272-292, 359-379, 414-434, 443-463, and 480-500; these read VVAV…ASGV, LTTI…MMLL, VADI…ASAP, VGSP…ALAL, RLAI…ASLS, MVAA…CVVM, FLSG…TSLC, ITLA…YALV, IVAS…AVVP, and YLCL…YAAI.

This sequence belongs to the EccD/Snm4 family. As to quaternary structure, part of the ESX-5 / type VII secretion system (T7SS), which is composed of cytosolic and membrane components. The ESX-5 membrane complex is composed of EccB5, EccC5, EccD5 and EccE5.

The protein resides in the cell inner membrane. Functionally, part of the ESX-5 specialized secretion system, which is responsible for the secretion of EsxN and a number of PE_PGRS and PPE proteins. This component is essential for ESX-5 complex stability and secretion. This chain is ESX-5 secretion system protein EccD5, found in Mycobacterium marinum (strain ATCC BAA-535 / M).